Consider the following 609-residue polypeptide: Glutamine--fructose-6-phosphate aminotransferase [isomerizing] (609 aa).

Residue cysteine 2 is the Nucleophile; for GATase activity of the active site. The region spanning 2–218 is the Glutamine amidotransferase type-2 domain; the sequence is CGIVGAIAQR…EGDIAEITRR (217 aa). 2 consecutive SIS domains span residues 286–426 and 458–599; these read ADEL…LKGL and LAED…VDQP. Catalysis depends on lysine 604, which acts as the For Fru-6P isomerization activity.

As to quaternary structure, homodimer.

The protein resides in the cytoplasm. The enzyme catalyses D-fructose 6-phosphate + L-glutamine = D-glucosamine 6-phosphate + L-glutamate. Catalyzes the first step in hexosamine metabolism, converting fructose-6P into glucosamine-6P using glutamine as a nitrogen source. This Shigella flexneri protein is Glutamine--fructose-6-phosphate aminotransferase [isomerizing].